A 185-amino-acid chain; its full sequence is MLTLASKLKRDDGLKGSRASASTSDSTRRVSVRDKLLVKEVAELEANLPCTCKVHFPDPNKLHCFQLTVSPDEGYYQGGKFQFETEVPDAYNMVPPKVKCLTKIWHPNITETGEICLSLLREHSIDGTGWAPTRTLKDVVWGLNSLFTDLLNFDDPLNIEAAEHHLRDKEDFRDKVDEYIKRYAR.

Position 1 is an N-acetylmethionine (M1). A UBC core domain is found at 32–185; sequence VRDKLLVKEV…VDEYIKRYAR (154 aa). The active-site Glycyl thioester intermediate is C116.

It belongs to the ubiquitin-conjugating enzyme family. UBE2F subfamily. As to quaternary structure, interacts with UBA3 and RBX2. Interacts (N-terminally acetylated form) with (via DCUN1 domain) DCUN1D1, DCUN1D2, DCUN1D3, DCUN1D4 and DCUN1D5. In terms of processing, the acetylation of Met-1 increases affinity for DCUN1D3 by about 2 orders of magnitude and is crucial for NEDD8 transfer to cullins.

It carries out the reaction [E1 NEDD8-activating enzyme]-S-[NEDD8 protein]-yl-L-cysteine + [E2 NEDD8-conjugating enzyme]-L-cysteine = [E1 NEDD8-activating enzyme]-L-cysteine + [E2 NEDD8-conjugating enzyme]-S-[NEDD8-protein]-yl-L-cysteine.. It participates in protein modification; protein neddylation. In terms of biological role, accepts the ubiquitin-like protein NEDD8 from the UBA3-NAE1 E1 complex and catalyzes its covalent attachment to other proteins. Together with the E3 ubiquitin ligase RNF7/RBX2, specifically neddylates cullin-5 (CUL5). Does not neddylate CUL1, CUL2, CUL3, CUL4A or CUL4B. Mediates neddylation of the CUL9-RBX1 complex. The polypeptide is NEDD8-conjugating enzyme UBE2F (Ube2f) (Rattus norvegicus (Rat)).